A 303-amino-acid polypeptide reads, in one-letter code: Kynurenine formamidase (303 aa).

The HGGXW motif lies at 95 to 99 (HGGYW). The active-site Nucleophile is Ser-164. Residues Asp-247 and His-279 contribute to the active site.

This sequence belongs to the kynurenine formamidase family. Homodimer.

Its subcellular location is the cytoplasm. It localises to the cytosol. The protein resides in the nucleus. The catalysed reaction is N-formyl-L-kynurenine + H2O = L-kynurenine + formate + H(+). It functions in the pathway amino-acid degradation; L-tryptophan degradation via kynurenine pathway; L-kynurenine from L-tryptophan: step 2/2. Catalyzes the hydrolysis of N-formyl-L-kynurenine to L-kynurenine, the second step in the kynurenine pathway of tryptophan degradation. Kynurenine may be further oxidized to nicotinic acid, NAD(H) and NADP(H). Required for elimination of toxic metabolites. The chain is Kynurenine formamidase from Homo sapiens (Human).